We begin with the raw amino-acid sequence, 1148 residues long: Small G protein signaling modulator 1 (1148 aa).

The region spanning 36–190 (HEDSSHIISF…EYTKMKTADH (155 aa)) is the RUN domain. Positions 256-297 (LLYGKNNVLVQPRDDMEAVPGYLSLHQTADVMTLKWTPNQLM) are important for interaction with RAB9A and RAB9B. The segment at 301 to 350 (VGDLDYEKSVYWDYAMTIRLEEIVYLHCHQQVDSGGTVVLVSQDGIQRPP) is required for interaction with RAP family members. Disordered regions lie at residues 377–411 (DPPL…DKDD), 700–830 (DSTI…PREE), and 871–894 (GWRS…EEPE). Residues 385-397 (GKGKVFPKLRKRS) are compositionally biased toward basic residues. A Rab-GAP TBC domain is found at 617 to 1081 (GIQPEIRKAV…LVWETIWAAK (465 aa)). The segment covering 702–716 (TISNESSQSCSSGRQ) has biased composition (polar residues). Residues 742-751 (AEGRLEEKQP) show a composition bias toward basic and acidic residues. Residues 757 to 802 (NLVNGTCSPDSGHPSSHNFSSGLSEHSEPSLSTEDSVLDAQRNTPT) show a composition bias toward polar residues. Basic and acidic residues-rich tracts occupy residues 805–816 (RPRDGSVDDRQS) and 871–883 (GWRS…HGQA). Acidic residues predominate over residues 884-894 (DSEDNLSEEPE).

It belongs to the RUTBC family. As to quaternary structure, interacts with RAB9A (GTP-bound form) and RAB9B (GTP-bound form); has much lower affinity for GDP-bound RAB9A and RAB9B. Interacts with RAB3A, RAB4A, RAB5A, RAB8A, RAB11A, RAP1A, RAP1B, RAP2A and RAP2B. No interaction with RAB27A. Mainly expressed in brain, heart and testis.

It localises to the golgi apparatus. The protein resides in the trans-Golgi network. The protein localises to the cytoplasmic vesicle membrane. It is found in the cytoplasm. Interacts with numerous Rab family members, functioning as Rab effector for some, and as GTPase activator for others. Promotes GTP hydrolysis by RAB34 and RAB36. Probably functions as a GTPase effector with RAB9A and RAB9B; does not stimulate GTP hydrolysis with RAB9A and RAB9B. This Homo sapiens (Human) protein is Small G protein signaling modulator 1 (SGSM1).